We begin with the raw amino-acid sequence, 148 residues long: Sperm-specific protein PHI-2B (148 aa).

Residues 1-35 show a composition bias toward basic residues; it reads PSPSRRSRSRSRSRSKSPKRSPAKKARKTPKKRRA. 2 disordered regions span residues 1-44 and 97-148; these read PSPS…KPST and GVLV…KSNN. The 80-residue stretch at 40–119 folds into the H15 domain; that stretch reads KKPSTLSMIV…GATGSFRVGK (80 aa). Residues 124-148 show a composition bias toward basic residues; the sequence is PKKKAKKAKSPKKKSSKKSSNKSNN.

It belongs to the histone H1/H5 family. As to expression, sperm.

It localises to the nucleus. Its subcellular location is the chromosome. Its function is as follows. Linker histones are implicated in chromatin remodeling and/or transcriptional regulation during spermiogenesis, the process of spermatid maturation into spermatozoa. The protein is Sperm-specific protein PHI-2B of Mytilus californianus (California mussel).